The primary structure comprises 195 residues: dTDP-4-dehydrorhamnose 3,5-epimerase (195 aa).

Substrate is bound by residues Arg31, Glu36, 54–56, and Arg67; that span reads QDN. His70 acts as the Proton acceptor in catalysis. Residues Lys80 and His127 each coordinate substrate. Tyr140 (proton donor) is an active-site residue. Substrate contacts are provided by Asp151 and Lys176.

It belongs to the dTDP-4-dehydrorhamnose 3,5-epimerase family. Homodimer.

The enzyme catalyses dTDP-4-dehydro-6-deoxy-alpha-D-glucose = dTDP-4-dehydro-beta-L-rhamnose. Its pathway is carbohydrate biosynthesis; dTDP-L-rhamnose biosynthesis. Its function is as follows. Catalyzes the epimerization of the C3' and C5'positions of dTDP-6-deoxy-D-xylo-4-hexulose, forming dTDP-6-deoxy-L-lyxo-4-hexulose. The polypeptide is dTDP-4-dehydrorhamnose 3,5-epimerase (Sinorhizobium fredii (strain NBRC 101917 / NGR234)).